We begin with the raw amino-acid sequence, 643 residues long: Phosphomethylpyrimidine synthase (643 aa).

Residues asparagine 248, methionine 277, tyrosine 306, histidine 342, 362-364 (SRG), 403-406 (DGLR), and glutamate 442 contribute to the substrate site. Histidine 446 contacts Zn(2+). Tyrosine 469 contacts substrate. Histidine 510 is a binding site for Zn(2+). The [4Fe-4S] cluster site is built by cysteine 590, cysteine 593, and cysteine 598.

This sequence belongs to the ThiC family. In terms of assembly, homodimer. It depends on [4Fe-4S] cluster as a cofactor.

It carries out the reaction 5-amino-1-(5-phospho-beta-D-ribosyl)imidazole + S-adenosyl-L-methionine = 4-amino-2-methyl-5-(phosphooxymethyl)pyrimidine + CO + 5'-deoxyadenosine + formate + L-methionine + 3 H(+). It participates in cofactor biosynthesis; thiamine diphosphate biosynthesis. In terms of biological role, catalyzes the synthesis of the hydroxymethylpyrimidine phosphate (HMP-P) moiety of thiamine from aminoimidazole ribotide (AIR) in a radical S-adenosyl-L-methionine (SAM)-dependent reaction. This is Phosphomethylpyrimidine synthase from Burkholderia cenocepacia (strain ATCC BAA-245 / DSM 16553 / LMG 16656 / NCTC 13227 / J2315 / CF5610) (Burkholderia cepacia (strain J2315)).